Consider the following 233-residue polypeptide: Small ribosomal subunit protein uS3 (233 aa).

The KH type-2 domain maps to 39–107 (VRKYLTKELE…PAQINIAEVR (69 aa)).

Belongs to the universal ribosomal protein uS3 family. In terms of assembly, part of the 30S ribosomal subunit. Forms a tight complex with proteins S10 and S14.

Its function is as follows. Binds the lower part of the 30S subunit head. Binds mRNA in the 70S ribosome, positioning it for translation. In Pectobacterium carotovorum subsp. carotovorum (strain PC1), this protein is Small ribosomal subunit protein uS3.